We begin with the raw amino-acid sequence, 79 residues long: UPF0291 protein BH2353 (79 aa).

Positions 57 to 79 are disordered; that stretch reads GAGNDVTPDKLKQSKNKYRNDIH. The segment covering 63-79 has biased composition (basic and acidic residues); the sequence is TPDKLKQSKNKYRNDIH.

It belongs to the UPF0291 family.

It localises to the cytoplasm. The polypeptide is UPF0291 protein BH2353 (Halalkalibacterium halodurans (strain ATCC BAA-125 / DSM 18197 / FERM 7344 / JCM 9153 / C-125) (Bacillus halodurans)).